Here is a 387-residue protein sequence, read N- to C-terminus: Phosphoglycerate kinase (387 aa).

Residues 21–23 (DLN), R36, 59–62 (HLGR), R113, and R146 contribute to the substrate site. Residues K197, E314, and 340–343 (GGDT) contribute to the ATP site.

This sequence belongs to the phosphoglycerate kinase family. Monomer.

The protein localises to the cytoplasm. It carries out the reaction (2R)-3-phosphoglycerate + ATP = (2R)-3-phospho-glyceroyl phosphate + ADP. Its pathway is carbohydrate degradation; glycolysis; pyruvate from D-glyceraldehyde 3-phosphate: step 2/5. This is Phosphoglycerate kinase from Tolumonas auensis (strain DSM 9187 / NBRC 110442 / TA 4).